Consider the following 172-residue polypeptide: Large ribosomal subunit protein uL10 (172 aa).

Belongs to the universal ribosomal protein uL10 family. Part of the ribosomal stalk of the 50S ribosomal subunit. The N-terminus interacts with L11 and the large rRNA to form the base of the stalk. The C-terminus forms an elongated spine to which L12 dimers bind in a sequential fashion forming a multimeric L10(L12)X complex.

In terms of biological role, forms part of the ribosomal stalk, playing a central role in the interaction of the ribosome with GTP-bound translation factors. In Brucella abortus biovar 1 (strain 9-941), this protein is Large ribosomal subunit protein uL10 (rplJ).